Here is a 184-residue protein sequence, read N- to C-terminus: Crossover junction endodeoxyribonuclease RuvC (184 aa).

Catalysis depends on residues Asp-11, Glu-73, and Asp-147. Positions 11, 73, and 147 each coordinate Mg(2+).

The protein belongs to the RuvC family. Homodimer which binds Holliday junction (HJ) DNA. The HJ becomes 2-fold symmetrical on binding to RuvC with unstacked arms; it has a different conformation from HJ DNA in complex with RuvA. In the full resolvosome a probable DNA-RuvA(4)-RuvB(12)-RuvC(2) complex forms which resolves the HJ. Requires Mg(2+) as cofactor.

Its subcellular location is the cytoplasm. It carries out the reaction Endonucleolytic cleavage at a junction such as a reciprocal single-stranded crossover between two homologous DNA duplexes (Holliday junction).. Its function is as follows. The RuvA-RuvB-RuvC complex processes Holliday junction (HJ) DNA during genetic recombination and DNA repair. Endonuclease that resolves HJ intermediates. Cleaves cruciform DNA by making single-stranded nicks across the HJ at symmetrical positions within the homologous arms, yielding a 5'-phosphate and a 3'-hydroxyl group; requires a central core of homology in the junction. The consensus cleavage sequence is 5'-(A/T)TT(C/G)-3'. Cleavage occurs on the 3'-side of the TT dinucleotide at the point of strand exchange. HJ branch migration catalyzed by RuvA-RuvB allows RuvC to scan DNA until it finds its consensus sequence, where it cleaves and resolves the cruciform DNA. The protein is Crossover junction endodeoxyribonuclease RuvC of Neisseria gonorrhoeae (strain ATCC 700825 / FA 1090).